A 1137-amino-acid polypeptide reads, in one-letter code: DNA-directed RNA polymerase III subunit RPC2 (1137 aa).

The C4-type zinc finger occupies 1084–1099 (DVCRTCGRMAYCSWCH). Zn(2+)-binding residues include C1086, C1089, C1098, and C1101.

This sequence belongs to the RNA polymerase beta chain family. Component of the RNA polymerase III (Pol III) complex consisting of 17 subunits.

It localises to the nucleus. It carries out the reaction RNA(n) + a ribonucleoside 5'-triphosphate = RNA(n+1) + diphosphate. In terms of biological role, DNA-dependent RNA polymerase catalyzes the transcription of DNA into RNA using the four ribonucleoside triphosphates as substrates. Second largest core component of RNA polymerase III which synthesizes small RNAs, such as 5S rRNA and tRNAs. Proposed to contribute to the polymerase catalytic activity and forms the polymerase active center together with the largest subunit. Pol III is composed of mobile elements and Polr3B is part of the core element with the central large cleft and probably a clamp element that moves to open and close the cleft. The polypeptide is DNA-directed RNA polymerase III subunit RPC2 (Drosophila melanogaster (Fruit fly)).